Here is a 78-residue protein sequence, read N- to C-terminus: MAAHCQVTGAEPGFGHSISHSHRRNKRRFDPNIQKKRYWVPSLRRNVTLQVSARGIKTIDVRGIDAVVASILARGVKL.

The segment at 1-31 (MAAHCQVTGAEPGFGHSISHSHRRNKRRFDP) is disordered.

The protein belongs to the bacterial ribosomal protein bL28 family.

This is Large ribosomal subunit protein bL28 from Pseudarthrobacter chlorophenolicus (strain ATCC 700700 / DSM 12829 / CIP 107037 / JCM 12360 / KCTC 9906 / NCIMB 13794 / A6) (Arthrobacter chlorophenolicus).